The primary structure comprises 259 residues: Ditrans,polycis-undecaprenyl-diphosphate synthase ((2E,6E)-farnesyl-diphosphate specific) (259 aa).

Aspartate 32 is a catalytic residue. Residue aspartate 32 coordinates Mg(2+). Residues 33 to 36 (GNGR), tryptophan 37, arginine 45, histidine 49, and 77 to 79 (STE) each bind substrate. The active-site Proton acceptor is the asparagine 80. Substrate is bound by residues tryptophan 81, arginine 83, arginine 203, and 209–211 (RIS). Glutamate 222 contacts Mg(2+).

Belongs to the UPP synthase family. In terms of assembly, homodimer. Requires Mg(2+) as cofactor.

The catalysed reaction is 8 isopentenyl diphosphate + (2E,6E)-farnesyl diphosphate = di-trans,octa-cis-undecaprenyl diphosphate + 8 diphosphate. In terms of biological role, catalyzes the sequential condensation of isopentenyl diphosphate (IPP) with (2E,6E)-farnesyl diphosphate (E,E-FPP) to yield (2Z,6Z,10Z,14Z,18Z,22Z,26Z,30Z,34E,38E)-undecaprenyl diphosphate (di-trans,octa-cis-UPP). UPP is the precursor of glycosyl carrier lipid in the biosynthesis of bacterial cell wall polysaccharide components such as peptidoglycan and lipopolysaccharide. In Lactiplantibacillus plantarum (strain ATCC BAA-793 / NCIMB 8826 / WCFS1) (Lactobacillus plantarum), this protein is Ditrans,polycis-undecaprenyl-diphosphate synthase ((2E,6E)-farnesyl-diphosphate specific) (uppS).